Consider the following 188-residue polypeptide: Elongation factor P (188 aa).

This sequence belongs to the elongation factor P family.

It localises to the cytoplasm. The protein operates within protein biosynthesis; polypeptide chain elongation. Functionally, involved in peptide bond synthesis. Stimulates efficient translation and peptide-bond synthesis on native or reconstituted 70S ribosomes in vitro. Probably functions indirectly by altering the affinity of the ribosome for aminoacyl-tRNA, thus increasing their reactivity as acceptors for peptidyl transferase. The chain is Elongation factor P from Bdellovibrio bacteriovorus (strain ATCC 15356 / DSM 50701 / NCIMB 9529 / HD100).